Consider the following 246-residue polypeptide: NH(3)-dependent NAD(+) synthetase (246 aa).

Gly29 to Ser36 provides a ligand contact to ATP. Asp35 serves as a coordination point for Mg(2+). Residue Arg110 participates in deamido-NAD(+) binding. An ATP-binding site is contributed by Thr130. Position 135 (Glu135) interacts with Mg(2+). Lys159 and Ser181 together coordinate ATP.

The protein belongs to the NAD synthetase family. In terms of assembly, homodimer.

It catalyses the reaction deamido-NAD(+) + NH4(+) + ATP = AMP + diphosphate + NAD(+) + H(+). It participates in cofactor biosynthesis; NAD(+) biosynthesis; NAD(+) from deamido-NAD(+) (ammonia route): step 1/1. Catalyzes the ATP-dependent amidation of deamido-NAD to form NAD. Uses ammonia as a nitrogen source. This is NH(3)-dependent NAD(+) synthetase from Campylobacter jejuni subsp. jejuni serotype O:6 (strain 81116 / NCTC 11828).